A 365-amino-acid polypeptide reads, in one-letter code: UDP-N-acetylglucosamine--N-acetylmuramyl-(pentapeptide) pyrophosphoryl-undecaprenol N-acetylglucosamine transferase (365 aa).

Residues 10–12 (TGG), N128, R170, S199, I250, and Q295 contribute to the UDP-N-acetyl-alpha-D-glucosamine site.

This sequence belongs to the glycosyltransferase 28 family. MurG subfamily.

It localises to the cell inner membrane. The enzyme catalyses di-trans,octa-cis-undecaprenyl diphospho-N-acetyl-alpha-D-muramoyl-L-alanyl-D-glutamyl-meso-2,6-diaminopimeloyl-D-alanyl-D-alanine + UDP-N-acetyl-alpha-D-glucosamine = di-trans,octa-cis-undecaprenyl diphospho-[N-acetyl-alpha-D-glucosaminyl-(1-&gt;4)]-N-acetyl-alpha-D-muramoyl-L-alanyl-D-glutamyl-meso-2,6-diaminopimeloyl-D-alanyl-D-alanine + UDP + H(+). Its pathway is cell wall biogenesis; peptidoglycan biosynthesis. In terms of biological role, cell wall formation. Catalyzes the transfer of a GlcNAc subunit on undecaprenyl-pyrophosphoryl-MurNAc-pentapeptide (lipid intermediate I) to form undecaprenyl-pyrophosphoryl-MurNAc-(pentapeptide)GlcNAc (lipid intermediate II). This is UDP-N-acetylglucosamine--N-acetylmuramyl-(pentapeptide) pyrophosphoryl-undecaprenol N-acetylglucosamine transferase from Pelodictyon phaeoclathratiforme (strain DSM 5477 / BU-1).